Reading from the N-terminus, the 422-residue chain is Serine protease HTRA2, mitochondrial (422 aa).

The N-terminal 17 residues, 1–17 (MALRGSHRLEVIFKRCI), are a transit peptide targeting the mitochondrion. The propeptide occupies 18–74 (ASPVLHSQAGNRRSSQLAIKGVDPNSNGNSGQYQQNGEHKEKGWRRLVRFFVPFSLG). The interval 28-55 (NRRSSQLAIKGVDPNSNGNSGQYQQNGE) is disordered. The span at 42-53 (NSNGNSGQYQQN) shows a compositional bias: low complexity. A helical membrane pass occupies residues 64–82 (LVRFFVPFSLGAAVSAAII). 2 short sequence motifs (IAP-binding) span residues 75-78 (AAVS) and 94-97 (SKMT). The serine protease stretch occupies residues 139 to 302 (SNGSGFIIEQ…IPIDYVKVFL (164 aa)). Catalysis depends on charge relay system residues H157, D189, and S266. The region spanning 325–410 (MGITMLTLTP…TLDIVILRGV (86 aa)) is the PDZ domain.

This sequence belongs to the peptidase S1C family. As to quaternary structure, interacts with th/DIAP1 (via BIR 2 domain).

It is found in the mitochondrion intermembrane space. The protein localises to the mitochondrion membrane. The catalysed reaction is Cleavage of non-polar aliphatic amino-acids at the P1 position, with a preference for Val, Ile and Met. At the P2 and P3 positions, Arg is selected most strongly with a secondary preference for other hydrophilic residues.. In terms of biological role, serine protease that shows proteolytic activity against a non-specific substrate beta-casein. Promotes or induces cell death either by direct binding to and inhibition of BIRC proteins (also called inhibitor of apoptosis proteins, IAPs), leading to an increase in caspase activity, or by a BIRC inhibition-independent, caspase-independent and serine protease activity-dependent mechanism. Can antagonize antiapoptotic activity of th/Diap1 by directly inducing the degradation of th/Diap1. The sequence is that of Serine protease HTRA2, mitochondrial from Drosophila sechellia (Fruit fly).